A 191-amino-acid polypeptide reads, in one-letter code: Cell division protein SepF (191 aa).

The span at 150–164 (TSSSPEEASPSSVST) shows a compositional bias: low complexity. The interval 150–191 (TSSSPEEASPSSVSTENTPQYSLGKNTTPEPAWGNSKLSAYS) is disordered. The segment covering 165-178 (ENTPQYSLGKNTTP) has biased composition (polar residues).

The protein belongs to the SepF family. In terms of assembly, homodimer. Interacts with FtsZ.

The protein resides in the cytoplasm. In terms of biological role, cell division protein that is part of the divisome complex and is recruited early to the Z-ring. Probably stimulates Z-ring formation, perhaps through the cross-linking of FtsZ protofilaments. Its function overlaps with FtsA. This Prochlorococcus marinus (strain AS9601) protein is Cell division protein SepF.